A 230-amino-acid polypeptide reads, in one-letter code: Orotidine 5'-phosphate decarboxylase (230 aa).

Substrate contacts are provided by residues aspartate 10, lysine 32, 59-68 (DLKYHDIPNT), threonine 119, arginine 180, glutamine 189, glycine 209, and arginine 210. The Proton donor role is filled by lysine 61.

This sequence belongs to the OMP decarboxylase family. Type 1 subfamily. Homodimer.

The enzyme catalyses orotidine 5'-phosphate + H(+) = UMP + CO2. It participates in pyrimidine metabolism; UMP biosynthesis via de novo pathway; UMP from orotate: step 2/2. Its function is as follows. Catalyzes the decarboxylation of orotidine 5'-monophosphate (OMP) to uridine 5'-monophosphate (UMP). The sequence is that of Orotidine 5'-phosphate decarboxylase from Haemophilus ducreyi (strain 35000HP / ATCC 700724).